Consider the following 290-residue polypeptide: Syntaxin (290 aa).

Residues 1 to 22 (MTKDRLAALKAAQSDDDDNDDV) form a disordered region. The Cytoplasmic segment spans residues 1–267 (MTKDRLAALK…KYQSKARRKK (267 aa)). Residues 32–114 (MEEFFEQVDE…EEHTNKSSAD (83 aa)) are a coiled coil. The 63-residue stretch at 194–256 (LADIEARHND…ETAKMDTKKA (63 aa)) folds into the t-SNARE coiled-coil homology domain. Residues 268–288 (IMILVCLAILIIILVGVIGGT) form a helical; Anchor for type IV membrane protein membrane-spanning segment. The Extracellular portion of the chain corresponds to 289–290 (LG).

It belongs to the syntaxin family.

It is found in the membrane. Potentially involved in docking of synaptic vesicles at presynaptic active zones. The sequence is that of Syntaxin from Aplysia californica (California sea hare).